The primary structure comprises 450 residues: ATP-dependent protease ATPase subunit HslU (450 aa).

ATP is bound by residues valine 29, 71–76, aspartate 261, glutamate 328, and arginine 400; that span reads GVGKTE.

It belongs to the ClpX chaperone family. HslU subfamily. As to quaternary structure, a double ring-shaped homohexamer of HslV is capped on each side by a ring-shaped HslU homohexamer. The assembly of the HslU/HslV complex is dependent on binding of ATP.

It is found in the cytoplasm. ATPase subunit of a proteasome-like degradation complex; this subunit has chaperone activity. The binding of ATP and its subsequent hydrolysis by HslU are essential for unfolding of protein substrates subsequently hydrolyzed by HslV. HslU recognizes the N-terminal part of its protein substrates and unfolds these before they are guided to HslV for hydrolysis. This is ATP-dependent protease ATPase subunit HslU from Rickettsia peacockii (strain Rustic).